A 160-amino-acid chain; its full sequence is 6,7-dimethyl-8-ribityllumazine synthase (160 aa).

5-amino-6-(D-ribitylamino)uracil-binding positions include Trp27, 59–61 (AIE), and 81–83 (VVI). (2S)-2-hydroxy-3-oxobutyl phosphate is bound at residue 86 to 87 (DT). The active-site Proton donor is the His89. A 5-amino-6-(D-ribitylamino)uracil-binding site is contributed by Asn114. Arg128 serves as a coordination point for (2S)-2-hydroxy-3-oxobutyl phosphate.

Belongs to the DMRL synthase family. In terms of assembly, homopentamer.

It catalyses the reaction (2S)-2-hydroxy-3-oxobutyl phosphate + 5-amino-6-(D-ribitylamino)uracil = 6,7-dimethyl-8-(1-D-ribityl)lumazine + phosphate + 2 H2O + H(+). It functions in the pathway cofactor biosynthesis; riboflavin biosynthesis; riboflavin from 2-hydroxy-3-oxobutyl phosphate and 5-amino-6-(D-ribitylamino)uracil: step 1/2. Functionally, catalyzes the formation of 6,7-dimethyl-8-ribityllumazine by condensation of 5-amino-6-(D-ribitylamino)uracil with 3,4-dihydroxy-2-butanone 4-phosphate. This is the penultimate step in the biosynthesis of riboflavin. This Mycobacterium leprae (strain Br4923) protein is 6,7-dimethyl-8-ribityllumazine synthase.